We begin with the raw amino-acid sequence, 85 residues long: U4-theraphotoxin-Hhn1i (85 aa).

Residues 1 to 22 form the signal peptide; it reads MKVTLIAILTCAAVLVLHTTAA. The propeptide occupies 23–48; sequence EELEAESQLMEVGMPDTELAAVDEER. 3 cysteine pairs are disulfide-bonded: Cys-52-Cys-66, Cys-56-Cys-77, and Cys-71-Cys-82.

This sequence belongs to the neurotoxin 12 (Hwtx-2) family. 02 (Hwtx-2) subfamily. Expressed by the venom gland.

It localises to the secreted. In terms of biological role, postsynaptic neurotoxin. The protein is U4-theraphotoxin-Hhn1i of Cyriopagopus hainanus (Chinese bird spider).